A 261-amino-acid chain; its full sequence is Cytochrome c oxidase subunit 3 (261 aa).

Topologically, residues Met1 to Pro15 are mitochondrial matrix. A helical membrane pass occupies residues Trp16–Trp34. The Mitochondrial intermembrane segment spans residues Phe35–Thr40. A helical membrane pass occupies residues Thr41–Thr66. Residues Phe67–Thr72 lie on the Mitochondrial matrix side of the membrane. A helical transmembrane segment spans residues Pro73–Ser105. The Mitochondrial intermembrane segment spans residues Leu106–Glu128. Residues Val129–Met152 form a helical membrane-spanning segment. The Mitochondrial matrix portion of the chain corresponds to Glu153–Asn155. The helical transmembrane segment at Arg156–Glu183 threads the bilayer. Residues Ala184 to Asp190 lie on the Mitochondrial intermembrane side of the membrane. A helical transmembrane segment spans residues Gly191 to Leu223. At Lys224–His232 the chain is on the mitochondrial matrix side. A helical transmembrane segment spans residues Phe233 to Ile256. Topologically, residues Tyr257–Ser261 are mitochondrial intermembrane.

This sequence belongs to the cytochrome c oxidase subunit 3 family. As to quaternary structure, component of the cytochrome c oxidase (complex IV, CIV), a multisubunit enzyme composed of 14 subunits. The complex is composed of a catalytic core of 3 subunits MT-CO1, MT-CO2 and MT-CO3, encoded in the mitochondrial DNA, and 11 supernumerary subunits COX4I, COX5A, COX5B, COX6A, COX6B, COX6C, COX7A, COX7B, COX7C, COX8 and NDUFA4, which are encoded in the nuclear genome. The complex exists as a monomer or a dimer and forms supercomplexes (SCs) in the inner mitochondrial membrane with NADH-ubiquinone oxidoreductase (complex I, CI) and ubiquinol-cytochrome c oxidoreductase (cytochrome b-c1 complex, complex III, CIII), resulting in different assemblies (supercomplex SCI(1)III(2)IV(1) and megacomplex MCI(2)III(2)IV(2)).

Its subcellular location is the mitochondrion inner membrane. The catalysed reaction is 4 Fe(II)-[cytochrome c] + O2 + 8 H(+)(in) = 4 Fe(III)-[cytochrome c] + 2 H2O + 4 H(+)(out). In terms of biological role, component of the cytochrome c oxidase, the last enzyme in the mitochondrial electron transport chain which drives oxidative phosphorylation. The respiratory chain contains 3 multisubunit complexes succinate dehydrogenase (complex II, CII), ubiquinol-cytochrome c oxidoreductase (cytochrome b-c1 complex, complex III, CIII) and cytochrome c oxidase (complex IV, CIV), that cooperate to transfer electrons derived from NADH and succinate to molecular oxygen, creating an electrochemical gradient over the inner membrane that drives transmembrane transport and the ATP synthase. Cytochrome c oxidase is the component of the respiratory chain that catalyzes the reduction of oxygen to water. Electrons originating from reduced cytochrome c in the intermembrane space (IMS) are transferred via the dinuclear copper A center (CU(A)) of subunit 2 and heme A of subunit 1 to the active site in subunit 1, a binuclear center (BNC) formed by heme A3 and copper B (CU(B)). The BNC reduces molecular oxygen to 2 water molecules using 4 electrons from cytochrome c in the IMS and 4 protons from the mitochondrial matrix. This is Cytochrome c oxidase subunit 3 (MT-CO3) from Litocranius walleri (Gerenuk).